We begin with the raw amino-acid sequence, 116 residues long: Large ribosomal subunit protein bL19 (116 aa).

It belongs to the bacterial ribosomal protein bL19 family.

Its function is as follows. This protein is located at the 30S-50S ribosomal subunit interface and may play a role in the structure and function of the aminoacyl-tRNA binding site. In Pseudothermotoga lettingae (strain ATCC BAA-301 / DSM 14385 / NBRC 107922 / TMO) (Thermotoga lettingae), this protein is Large ribosomal subunit protein bL19.